The following is a 598-amino-acid chain: Vanadium-dependent bromoperoxidase (598 aa).

Ca(2+) contacts are provided by Phe-361, Gln-363, Asp-365, Asp-368, and Gln-370. The vanadate site is built by Lys-400 and Arg-408. The active site involves His-480. Residues Ser-485, Gly-486, His-487, Arg-547, and His-553 each coordinate vanadate. The active site involves His-487.

The protein belongs to the vanadium-dependent haloperoxidase family. In terms of assembly, homododecamer. Requires Ca(2+) as cofactor. Vanadate is required as a cofactor.

It carries out the reaction RH + Br(-) + H2O2 = RBr + 2 H2O.. Functionally, catalyzes the halogenation of organic substrates in the presence of hydrogen peroxide. The sequence is that of Vanadium-dependent bromoperoxidase from Corallina pilulifera (Red coralline alga).